The sequence spans 321 residues: XylDLEGF operon transcriptional activator 1 (321 aa).

Residues 214–315 (ERVVQFIEEN…GELPSDTLRQ (102 aa)) enclose the HTH araC/xylS-type domain. DNA-binding regions (H-T-H motif) lie at residues 231–252 (ERLA…EKHA) and 282–305 (ITEI…RSAF).

Its subcellular location is the cytoplasm. In terms of biological role, regulatory protein of the TOL plasmid xyl operons. XylS activates the xylXYZLTEGFJQKIH operon required for the degradation of toluene, m-xylene and p-xylene. In Pseudomonas putida (Arthrobacter siderocapsulatus), this protein is XylDLEGF operon transcriptional activator 1 (xylS1).